A 501-amino-acid chain; its full sequence is Type B diterpene cyclase (501 aa).

The protein belongs to the terpene synthase family. Monomer. The cofactor is Mg(2+).

It catalyses the reaction geranylgeranyl diphosphate = tuberculosinyl diphosphate. Strongly inhibited by 15-aza-dihydrogeranylgeraniol and 5-isopropyl-N,N,N,2-tetramethyl-4-(piperidine-1-carbonyloxy)benzenaminium chloride (Amo-1618). Inhibited by GGPP concentrations higher than 50 uM. Functionally, catalyzes the formation of tuberculosinyl diphosphate from geranylgeranyl diphosphate (GGPP). It could also react with (14R/S)-14,15-oxidoGGPP to generate 3alpha- and 3beta-hydroxytuberculosinyl diphosphate. The chain is Type B diterpene cyclase from Mycobacterium tuberculosis (strain ATCC 25618 / H37Rv).